An 88-amino-acid polypeptide reads, in one-letter code: Small ribosomal subunit protein uS15 (88 aa).

Positions 1–12 (MITQEEQQKIID) are enriched in basic and acidic residues. The disordered stretch occupies residues 1 to 24 (MITQEEQQKIIDRFGNGPNDTGTP).

It belongs to the universal ribosomal protein uS15 family. As to quaternary structure, part of the 30S ribosomal subunit. Forms a bridge to the 50S subunit in the 70S ribosome, contacting the 23S rRNA.

In terms of biological role, one of the primary rRNA binding proteins, it binds directly to 16S rRNA where it helps nucleate assembly of the platform of the 30S subunit by binding and bridging several RNA helices of the 16S rRNA. Forms an intersubunit bridge (bridge B4) with the 23S rRNA of the 50S subunit in the ribosome. The polypeptide is Small ribosomal subunit protein uS15 (Salinibacter ruber (strain DSM 13855 / M31)).